Here is a 225-residue protein sequence, read N- to C-terminus: Doublesex- and mab-3-related transcription factor C1 (225 aa).

The span at 1–12 (MQRPSGSREVRK) shows a compositional bias: basic and acidic residues. 2 disordered regions span residues 1 to 49 (MQRP…SHVH) and 179 to 216 (QTRH…LPSG). The span at 27–37 (RVKKHVVRRQK) shows a compositional bias: basic residues.

Belongs to the DMRT family.

This Rattus norvegicus (Rat) protein is Doublesex- and mab-3-related transcription factor C1 (Dmrtc1).